The chain runs to 246 residues: Probable septum site-determining protein MinC (246 aa).

This sequence belongs to the MinC family. Interacts with MinD and FtsZ.

Functionally, cell division inhibitor that blocks the formation of polar Z ring septums. Rapidly oscillates between the poles of the cell to destabilize FtsZ filaments that have formed before they mature into polar Z rings. Prevents FtsZ polymerization. The sequence is that of Probable septum site-determining protein MinC from Lachnospira eligens (strain ATCC 27750 / DSM 3376 / VPI C15-48 / C15-B4) (Eubacterium eligens).